The chain runs to 187 residues: UPF0398 protein LBA1157 (187 aa).

Belongs to the UPF0398 family.

The polypeptide is UPF0398 protein LBA1157 (Lactobacillus acidophilus (strain ATCC 700396 / NCK56 / N2 / NCFM)).